The following is a 217-amino-acid chain: Adenylate kinase (217 aa).

10–15 (GAGKGT) is a binding site for ATP. Positions 30–59 (STGDMFREAVAAGTELGVKVQNILSSGALV) are NMP. AMP-binding positions include Thr-31, Arg-36, 57 to 59 (ALV), 85 to 88 (GYPR), and Gln-92. An LID region spans residues 126 to 163 (SRRICPKCGKIYNLISMPPVSDQICDDCGEQLVIREDD). Arg-127 lines the ATP pocket. Residues Cys-130 and Cys-133 each coordinate Zn(2+). An ATP-binding site is contributed by 136–137 (IY). Positions 150 and 153 each coordinate Zn(2+). Residues Arg-160 and Arg-171 each contribute to the AMP site. Residue Arg-199 coordinates ATP.

This sequence belongs to the adenylate kinase family. In terms of assembly, monomer.

It is found in the cytoplasm. The enzyme catalyses AMP + ATP = 2 ADP. Its pathway is purine metabolism; AMP biosynthesis via salvage pathway; AMP from ADP: step 1/1. Catalyzes the reversible transfer of the terminal phosphate group between ATP and AMP. Plays an important role in cellular energy homeostasis and in adenine nucleotide metabolism. This is Adenylate kinase from Pseudothermotoga lettingae (strain ATCC BAA-301 / DSM 14385 / NBRC 107922 / TMO) (Thermotoga lettingae).